A 1191-amino-acid chain; its full sequence is Protogenin (1191 aa).

The signal sequence occupies residues 1–23 (MAPPVRPGMLPLLLLLLLPPLGS). 4 consecutive Ig-like domains span residues 24-124 (VPGV…AHLT), 126-216 (STIS…ASLT), 229-316 (PTII…ATLT), and 321-405 (PSFV…ARLT). The Extracellular segment spans residues 24–943 (VPGVWSFSEL…YYHLDQKSMT (920 aa)). Disulfide bonds link C54–C107 and C150–C199. Residue N237 is glycosylated (N-linked (GlcNAc...) asparagine). Cystine bridges form between C250-C298 and C342-C389. 5 consecutive Fibronectin type-III domains span residues 415 to 509 (APYN…TLED), 511 to 607 (PLRP…TPKA), 612 to 711 (APKS…VRDR), 718 to 811 (PPHH…TLPE), and 816 to 911 (PPVG…VLPK). N-linked (GlcNAc...) asparagine glycosylation is present at N624. Residues 944 to 964 (GIAVGVGIALTCILICVLILI) traverse the membrane as a helical segment. Topologically, residues 965–1191 (YRSKARKSSA…LRYAAEGFPV (227 aa)) are cytoplasmic. 2 disordered regions span residues 975–1010 (SKTAQSGTQPLSQASASVAAGSDMGKNLERATETAE) and 1079–1191 (ISDE…GFPV). The span at 977–990 (TAQSGTQPLSQASA) shows a compositional bias: polar residues. The span at 1104-1132 (DTEHSANSEGSHETGDSGRFSHESNDEIH) shows a compositional bias: basic and acidic residues. Composition is skewed to polar residues over residues 1135 to 1146 (SVISSTPPTSNP) and 1171 to 1180 (EQTSAPQTSA).

It belongs to the immunoglobulin superfamily. DCC family. In terms of tissue distribution, from mid-gastrulation to early somite stages, restricted to posterior neural plate and mesoderm with an anterior limit at the level of the rhombencephalon. Posterior restriction is progressively lost during somitogenesis. Expression is maintained in the neural tube and paraxial mesoderm during this process. As development proceeds, further restricted to the dorsal parts of the spinal cord and somites. In parallel, expression progresses caudally during axis elongation.

It localises to the membrane. May play a role in anteroposterior axis elongation. This is Protogenin from Mus musculus (Mouse).